Here is a 110-residue protein sequence, read N- to C-terminus: MLLKSTTRHIRIFTAEIEGNELQPSDTVLTLDVDPDNEFNWNEEALQKVYRQFDDLVESYAGQELSEYNLRRIGSELEVLLRQMLQAGEISYNLNCRVLNYSMGVPQAVV.

Belongs to the complex I NdhM subunit family. NDH-1 can be composed of about 15 different subunits; different subcomplexes with different compositions have been identified which probably have different functions.

The protein resides in the cellular thylakoid membrane. It catalyses the reaction a plastoquinone + NADH + (n+1) H(+)(in) = a plastoquinol + NAD(+) + n H(+)(out). It carries out the reaction a plastoquinone + NADPH + (n+1) H(+)(in) = a plastoquinol + NADP(+) + n H(+)(out). NDH-1 shuttles electrons from an unknown electron donor, via FMN and iron-sulfur (Fe-S) centers, to quinones in the respiratory and/or the photosynthetic chain. The immediate electron acceptor for the enzyme in this species is believed to be plastoquinone. Couples the redox reaction to proton translocation, and thus conserves the redox energy in a proton gradient. Cyanobacterial NDH-1 also plays a role in inorganic carbon-concentration. This is NAD(P)H-quinone oxidoreductase subunit M from Synechococcus elongatus (strain ATCC 33912 / PCC 7942 / FACHB-805) (Anacystis nidulans R2).